The sequence spans 585 residues: Parathyroid hormone/parathyroid hormone-related peptide receptor (585 aa).

A signal peptide spans 1 to 26 (MGAPRISHSLALLLCCSVLSSVYALV). The Extracellular portion of the chain corresponds to 27–185 (DADDVITKEE…REREVFDRLG (159 aa)). 3 disulfide bridges follow: Cys48–Cys114, Cys105–Cys145, and Cys128–Cys167. A disordered region spans residues 69–90 (MSRSAKTKKEKPAEKLYSQAEE). Residues Asn148, Asn158, Asn163, and Asn173 are each glycosylated (N-linked (GlcNAc...) asparagine). Residues 186-209 (MIYTVGYSISLGSLTVAVLILGYF) form a helical membrane-spanning segment. At 210–216 (RRLHCTR) the chain is on the cytoplasmic side. Residues 217-236 (NYIHMHLFVSFMLRAVSIFI) traverse the membrane as a helical segment. Residues 237-276 (KDAVLYSGVSTDEIERITEEELRAFTEPPPADKAGFVGCR) are Extracellular-facing. The helical transmembrane segment at 277-300 (VAVTVFLYFLTTNYYWILVEGLYL) threads the bilayer. Residues 301 to 314 (HSLIFMAFFSEKKY) lie on the Cytoplasmic side of the membrane. Residues 315-336 (LWGFTLFGWGLPAVFVAVWVTV) traverse the membrane as a helical segment. The Extracellular portion of the chain corresponds to 337–355 (RATLANTECWDLSSGNKKW). Residues 356-376 (IIQVPILAAIVVNFILFINII) form a helical membrane-spanning segment. Residues 377–403 (RVLATKLRETNAGRCDTRQQYRKLLKS) are Cytoplasmic-facing. A helical transmembrane segment spans residues 404–422 (TLVLMPLFGVHYIVFMATP). Residues 423–434 (YTEVSGILWQVQ) lie on the Extracellular side of the membrane. Residues 435–457 (MHYEMLFNSFQGFFVAIIYCFCN) form a helical membrane-spanning segment. Residues 458-585 (GEVQAEIKKS…LLEEERETVM (128 aa)) are Cytoplasmic-facing. An Important for interaction with G proteins motif is present at residues 468–471 (WSRW). Residues 531–585 (PGYVKHGSISENSLPSSGPEPGTKDDGYLNGSGLYEPMVGEQPPPLLEEERETVM) are disordered.

Belongs to the G-protein coupled receptor 2 family. In terms of assembly, homodimer in the absence of bound ligand. Peptide hormone binding leads to dissociation of the homodimer. In terms of processing, N-glycosylated.

The protein resides in the cell membrane. G-protein-coupled receptor for parathyroid hormone (PTH) and for parathyroid hormone-related peptide (PTHLH). Ligand binding causes a conformation change that triggers signaling via guanine nucleotide-binding proteins (G proteins) and modulates the activity of downstream effectors, such as adenylate cyclase (cAMP). PTH1R is coupled to G(s) G alpha proteins and mediates activation of adenylate cyclase activity. PTHLH dissociates from PTH1R more rapidly than PTH; as consequence, the cAMP response induced by PTHLH decays faster than the response induced by PTH. This Didelphis virginiana (North American opossum) protein is Parathyroid hormone/parathyroid hormone-related peptide receptor (PTH1R).